The following is a 199-amino-acid chain: Recombination protein RecR (199 aa).

The C4-type zinc-finger motif lies at 58–73 (CRICYNITDTEVCNIC). One can recognise a Toprim domain in the interval 81-176 (SLICVVSHPM…KVTRIAHGVP (96 aa)).

Belongs to the RecR family.

Its function is as follows. May play a role in DNA repair. It seems to be involved in an RecBC-independent recombinational process of DNA repair. It may act with RecF and RecO. The protein is Recombination protein RecR of Thermoanaerobacter sp. (strain X514).